The sequence spans 312 residues: Apulose-4-phosphate transketolase subunit B (312 aa).

It belongs to the transketolase family. Probable heterodimer composed of AptA and AptB. Requires thiamine diphosphate as cofactor.

It catalyses the reaction apulose 4-phosphate + D-glyceraldehyde 3-phosphate = D-xylulose 5-phosphate + dihydroxyacetone phosphate. Its pathway is carbohydrate metabolism. Its function is as follows. Involved in catabolism of D-apiose. Catalyzes the transfer of the glycolaldehyde group from apulose-4-phosphate to D-glyceraldehyde 3-phosphate, generating dihydroxyacetone phosphate and D-xylulose-5-phosphate. This Phocaeicola vulgatus (strain ATCC 8482 / DSM 1447 / JCM 5826 / CCUG 4940 / NBRC 14291 / NCTC 11154) (Bacteroides vulgatus) protein is Apulose-4-phosphate transketolase subunit B.